The primary structure comprises 631 residues: Transcription factor dibT (631 aa).

Positions 11–38 (CWTCRLRRKRCDSVQPVCGSCQSLEITC) form a DNA-binding region, zn(2)-C6 fungal-type. The span at 123-144 (SLADSSASTPSTSSGRPTTLRS) shows a compositional bias: low complexity. Disordered stretches follow at residues 123–148 (SLADSSASTPSTSSGRPTTLRSSVDR) and 469–488 (GLKDLDTSPPSPQPTKTSAG).

The protein localises to the nucleus. In terms of biological role, transcription factor; part of the gene cluster that mediates the biosynthesis of pestalotiollide B which is part of dibenzodioxocinones, a novel class of inhibitors against cholesterol ester transfer protein (CEPT). Acts as the key transcription factor within the cluster and positively regulates the expression of the cluster genes and the subsequent production of dibenzodioxocinones such as pestalotiollide B, pestalotiollide C, 1',2'-dehydropenicillide, 3'-methoxy-1',2'-dehydropenicillide and 1',2'-epoxy-3',4'-didehydropenicillide. Required for the expression of most PKS genes outside of the dibenzodioxocinones cluster, (43 out of 48 defined PKS genes), and promotes pigmentation of the mycelium and conidia. This chain is Transcription factor dibT, found in Pestalotiopsis microspora.